Consider the following 260-residue polypeptide: Phosphatidate cytidylyltransferase (260 aa).

A run of 7 helical transmembrane segments spans residues 9 to 29 (IIALIVFLPILLKGGLVLMIF), 46 to 66 (MIKFVSVPGLISAVGLIIIML), 70 to 90 (AGPWVQVIQLKSLIAMSFIVL), 102 to 122 (FMDAAFCLMSVAYVGIGFMFF), 130 to 150 (LHYILYAFLIVWLTDTGAYLF), 172 to 192 (FIGGLFCSLIVPLAMLYFVDF), and 196 to 216 (VWILLGVTLILSLFGQLGDLV).

This sequence belongs to the CDS family.

The protein localises to the cell membrane. The enzyme catalyses a 1,2-diacyl-sn-glycero-3-phosphate + CTP + H(+) = a CDP-1,2-diacyl-sn-glycerol + diphosphate. The protein operates within phospholipid metabolism; CDP-diacylglycerol biosynthesis; CDP-diacylglycerol from sn-glycerol 3-phosphate: step 3/3. In Staphylococcus aureus (strain COL), this protein is Phosphatidate cytidylyltransferase (cdsA).